The following is a 348-amino-acid chain: NADH-ubiquinone oxidoreductase chain 2 (348 aa).

Transmembrane regions (helical) follow at residues 3-23, 25-45, 59-79, 93-115, 149-169, 178-198, 201-221, 239-259, 276-296, and 326-346; these read PIIISMIGFTIILGTTIVLMS, HWFMIWIGFEMNMLAIIPVLM, YFLTQTTASMLMLLSVMINLI, TASTIMTLSLAMKLGLSPFHFWV, LNMTMLLTMSILSVVMGGWGG, ILAFSSIAHMGWMTAIIMFNP, TLLNLLLYILMTTTIFMILIF, IMTVIMLTILMSLGGLPPLSG, IALALIMAMSALLNLYFYMRL, and LPTLTIMSTLLLPLTPMMMML.

It belongs to the complex I subunit 2 family. Core subunit of respiratory chain NADH dehydrogenase (Complex I) which is composed of 45 different subunits. Interacts with TMEM242.

The protein resides in the mitochondrion inner membrane. It catalyses the reaction a ubiquinone + NADH + 5 H(+)(in) = a ubiquinol + NAD(+) + 4 H(+)(out). Functionally, core subunit of the mitochondrial membrane respiratory chain NADH dehydrogenase (Complex I) which catalyzes electron transfer from NADH through the respiratory chain, using ubiquinone as an electron acceptor. Essential for the catalytic activity and assembly of complex I. The polypeptide is NADH-ubiquinone oxidoreductase chain 2 (Thyroptera tricolor (Spix's disk-winged bat)).